We begin with the raw amino-acid sequence, 669 residues long: Pre-mRNA-processing factor 39 (669 aa).

Positions 1-10 (MQNSHMDEYR) are enriched in basic and acidic residues. The interval 1–23 (MQNSHMDEYRNSSNGSTGNSSEV) is disordered. The segment covering 11–23 (NSSNGSTGNSSEV) has biased composition (low complexity). Ser44 is modified (phosphoserine). 7 HAT repeats span residues 109 to 141 (NHLM…LEKR), 143 to 175 (DNIK…FLKE), 183 to 218 (ETNN…WENE), 220 to 253 (GNLR…HVQN), 333 to 365 (TFEE…FEIE), 367 to 399 (GTHE…YMEN), and 404 to 436 (GVRH…QQGN). Residues 599–624 (KEQDSLKRKAENGSEEPEEKKAHTED) are compositionally biased toward basic and acidic residues. Positions 599–634 (KEQDSLKRKAENGSEEPEEKKAHTEDTTSSSTQMID) are disordered. Polar residues predominate over residues 625–634 (TTSSSTQMID).

This sequence belongs to the PRP39 family.

It is found in the nucleus. Functionally, involved in pre-mRNA splicing. The polypeptide is Pre-mRNA-processing factor 39 (PRPF39) (Homo sapiens (Human)).